A 632-amino-acid chain; its full sequence is Sodium- and chloride-dependent GABA transporter 3 (632 aa).

The interval M1–V41 is disordered. Residues M1–E58 are Cytoplasmic-facing. Phosphoserine is present on S21. Helical transmembrane passes span F59 to L79, A87 to L106, and G131 to L151. Residues A152–R225 are Extracellular-facing. 3 N-linked (GlcNAc...) asparagine glycosylation sites follow: N187, N190, and N198. 9 helical membrane passes run W226–W244, V253–I270, I306–Y323, I335–L356, M389–L408, L438–T456, G473–S493, W514–I533, and I553–I571. At T572–F632 the chain is on the cytoplasmic side.

It belongs to the sodium:neurotransmitter symporter (SNF) (TC 2.A.22) family. SLC6A11 subfamily. As to expression, widespread distribution in the brain.

It localises to the cell membrane. The catalysed reaction is 4-aminobutanoate(out) + chloride(out) + 2 Na(+)(out) = 4-aminobutanoate(in) + chloride(in) + 2 Na(+)(in). The enzyme catalyses taurine(out) + chloride(out) + 2 Na(+)(out) = taurine(in) + chloride(in) + 2 Na(+)(in). It carries out the reaction beta-alanine(out) + chloride(out) + 2 Na(+)(out) = beta-alanine(in) + chloride(in) + 2 Na(+)(in). It catalyses the reaction hypotaurine(out) + chloride(out) + 2 Na(+)(out) = hypotaurine(in) + chloride(in) + 2 Na(+)(in). Its activity is regulated as follows. GABA transport is inhibited by SNAP-5114. In terms of biological role, mediates sodium- and chloride-dependent transport of gamma-aminobutyric acid (GABA). Can also mediate transport of beta-alanine and to a lower extent that of taurine and hypotaurine. The chain is Sodium- and chloride-dependent GABA transporter 3 (SLC6A11) from Homo sapiens (Human).